Here is a 269-residue protein sequence, read N- to C-terminus: Dynein regulatory complex protein 8 (269 aa).

The interval 1–113 (MLGPGQVRLR…RTGKGLGYNS (113 aa)) is disordered. Positions 54–76 (AQGSSSPGIQSGPSSRPGSPRGA) are enriched in low complexity. EF-hand domains are found at residues 150-185 (EFHK…LGCC) and 228-263 (IPED…EDGV).

It belongs to the DRC8 family. As to quaternary structure, component of the nexin-dynein regulatory complex (N-DRC).

It localises to the cytoplasm. The protein resides in the cytoskeleton. Its subcellular location is the flagellum axoneme. Component of the nexin-dynein regulatory complex (N-DRC), a key regulator of ciliary/flagellar motility which maintains the alignment and integrity of the distal axoneme and regulates microtubule sliding in motile axonemes. This Homo sapiens (Human) protein is Dynein regulatory complex protein 8 (EFCAB2).